A 153-amino-acid polypeptide reads, in one-letter code: Calmodulin-like protein 3 (153 aa).

EF-hand domains follow at residues M1–Y36, I37–E72, D74–K109, and R112–A147. D14, N16, D18, K20, E25, D50, N52, D54, Y56, E61, D87, N89, D91, E98, D125, D127, D129, M131, and E136 together coordinate Ca(2+).

This sequence belongs to the calmodulin family.

In terms of biological role, potential calcium sensor. The protein is Calmodulin-like protein 3 (CML3) of Arabidopsis thaliana (Mouse-ear cress).